Reading from the N-terminus, the 370-residue chain is Myomodulin neuropeptides 1 (370 aa).

A signal peptide spans 1–18 (MQVYMLLPLAVFASLTYQ). A propeptide spanning residues 19–50 (GACEETAAAQTSSDASTSSASSEHAENELSRA) is cleaved from the precursor. The span at 28–40 (QTSSDASTSSASS) shows a compositional bias: low complexity. A disordered region spans residues 28–52 (QTSSDASTSSASSEHAENELSRAKR). 2 positions are modified to leucine amide: Leu-60 and Leu-69. A propeptide spanning residues 73–190 (GGPVEPESEE…EPEEGGLGEE (118 aa)) is cleaved from the precursor. Leucine amide is present on residues Leu-199 and Leu-209. A compositionally biased stretch (basic and acidic residues) spans 210–226 (GKREGEEGDEMDKKQDE). A disordered region spans residues 210 to 230 (GKREGEEGDEMDKKQDESLND). A propeptide spanning residues 213–237 (EGEEGDEMDKKQDESLNDDFENDDI) is cleaved from the precursor. Leucine amide is present on residues Leu-246, Leu-256, Leu-266, Leu-276, Leu-286, Leu-296, Leu-306, Leu-316, Leu-326, Leu-336, and Leu-346. The disordered stretch occupies residues 344–370 (LRLGKRDDDEKEKKSLNMSRLGKRSTQ). Residues 347 to 358 (GKRDDDEKEKKS) show a composition bias toward basic and acidic residues. The propeptide occupies 350–355 (DDDEKE). Leucine amide is present on Leu-364. Residues 368-370 (STQ) constitute a propeptide that is removed on maturation.

Expressed in all ganglia of the CNS, but only in a subset of neurons including L10 in the abdominal ganglion and B16 in the buccal ganglion.

The protein localises to the secreted. Functionally, exogenous application of myomodulins potentiates ARC muscle contraction. The polypeptide is Myomodulin neuropeptides 1 (MYOMOD1) (Aplysia californica (California sea hare)).